We begin with the raw amino-acid sequence, 1957 residues long: Sporulation-specific protein 15 (1957 aa).

2 stretches are compositionally biased toward low complexity: residues 1–12 (MSNQSSSGSNTS) and 19–28 (ASSLVSSAAS). Residues 1–102 (MSNQSSSGSN…STASSALPLT (102 aa)) form a disordered region. A compositionally biased stretch (basic and acidic residues) spans 58–83 (SQHEDSSEELKRQEVRGMRRHSDLSI). The segment covering 90–102 (SEGSTASSALPLT) has biased composition (polar residues). Position 105 is a phosphoserine (S105). Coiled-coil stretches lie at residues 199–785 (KQSE…FTSL), 804–1235 (VNMQ…DLLD), 1320–1471 (KVVA…SLDD), and 1481–1723 (EKLG…EQHE).

Belongs to the MPC70 family. In terms of assembly, monomer.

Its subcellular location is the cytoplasm. It localises to the cytoskeleton. The protein localises to the microtubule organizing center. The protein resides in the spindle pole body. Its function is as follows. Has a role in the initiation of spore membrane formation. This Schizosaccharomyces pombe (strain 972 / ATCC 24843) (Fission yeast) protein is Sporulation-specific protein 15 (spo15).